Consider the following 260-residue polypeptide: Thiazole synthase (260 aa).

Lys-102 acts as the Schiff-base intermediate with DXP in catalysis. 1-deoxy-D-xylulose 5-phosphate-binding positions include Gly-163, Ala-189–Gly-190, and Asn-211–Thr-212.

This sequence belongs to the ThiG family. As to quaternary structure, homotetramer. Forms heterodimers with either ThiH or ThiS.

It localises to the cytoplasm. It carries out the reaction [ThiS sulfur-carrier protein]-C-terminal-Gly-aminoethanethioate + 2-iminoacetate + 1-deoxy-D-xylulose 5-phosphate = [ThiS sulfur-carrier protein]-C-terminal Gly-Gly + 2-[(2R,5Z)-2-carboxy-4-methylthiazol-5(2H)-ylidene]ethyl phosphate + 2 H2O + H(+). It functions in the pathway cofactor biosynthesis; thiamine diphosphate biosynthesis. In terms of biological role, catalyzes the rearrangement of 1-deoxy-D-xylulose 5-phosphate (DXP) to produce the thiazole phosphate moiety of thiamine. Sulfur is provided by the thiocarboxylate moiety of the carrier protein ThiS. In vitro, sulfur can be provided by H(2)S. This is Thiazole synthase from Geobacter sulfurreducens (strain ATCC 51573 / DSM 12127 / PCA).